The primary structure comprises 305 residues: MNDAKKYIVSVLILLVAGMFGGCIKEDYSDCPRPFRLTVRAWDADMQDITETGAVQRVVIFVFDETGRRIDRLMMDAAQVAARKPIPLEYDGPTTVSFVAWANPDDHMLEETANVQNVKDLFFRLSSTDGIAQSPGDLFSGVLTCPIEYGSIEQGTDQTVDIYRRTAQVHIIIRGYQEWLDANGPRQLPDYADILLGETPDTYTGLAELIGNAVQYRPDGQIQNGDFISPIFRVYPTLDTTPLHLKLYAYGQELLNISTGSDGVPFIPVIGKMLNIYIDLRGANLNVLVSVTPWDVVQQQQYAEY.

The first 22 residues, 1-22 (MNDAKKYIVSVLILLVAGMFGG), serve as a signal peptide directing secretion. Residue Cys-23 is the site of N-palmitoyl cysteine attachment. Cys-23 carries S-diacylglycerol cysteine lipidation.

This sequence belongs to the bacteroidetes fimbrillin superfamily. FimB/Mfa2 family. FimB is not part of the fimbrium itself, but anchors the fimbrium in the outer membrane. Linear, head-to-tail oligomerization of fimbrial subunits mediates assembly of the fimbrium stalk, while the minor components FimC, FimD and FimE probably form the fimbrium tip. The anchoring subunit FimB limits fimbrium length and is important for solid fimbrium attachment to the outer membrane. In its absence, the major fimbriae become very long and are easily detached from the membrane.

The protein resides in the cell outer membrane. In terms of biological role, anchoring subunit of the major fimbriae. Regulates fimbrial length. These filamentous pili are attached to the cell surface; they mediate biofilm formation, adhesion onto host cells and onto other bacteria that are part of the oral microbiome. Fimbriae of P.gingivalis are major virulence factors. The sequence is that of Major fimbrium anchoring subunit FimB from Porphyromonas gingivalis (Bacteroides gingivalis).